The chain runs to 490 residues: MEHRIFGIESEFGLSYVPHGLGRLSIEESAAALFKPVLDQWRSTNVFLPNGGRLYLDVGSHPEYASAECGSIDELLAQERAGELLFADLARTARKRLLAGSEGRPLDGELYLFKNNVDSAGNSYGSHENYLISRKLQFNDLIAQLVPFLVTRQILVGAGKTHPNGGPVPGSTDPASSTGVPSYSFSQRADHIWEAASTSTSRARPLINTRDEPHADASKFRRMHVINGDSNMAEPTTLLKIASTDLVLRMLEDRFPVTSLDIVSVPAALRAISHDLTGTATFETTDGKHYTALSVQRHYLDAARQYVQQYGAHHHHVEYALDLWQRTLDAIESGDYSSIDSEIDWAIKKKLLDAYIARARAAGQPADYASARIRQLDLAYHDIDPERSVFHALVRRGAVKRILPEGAAEAAKTQPPNTRALQRSRFINAAVAAGEQFTVDWVHLKLNAYPQHTLVCKDPFATDSEGLEEVLTLLEGKARQHQEAAFPPPC.

Residue Glu9 coordinates Mg(2+). Residue Arg53 coordinates ATP. Tyr55 lines the Mg(2+) pocket. The Proton acceptor role is filled by Asp57. A Mg(2+)-binding site is contributed by Glu63. Residue Ser66 participates in ATP binding. Residues 160–181 (KTHPNGGPVPGSTDPASSTGVP) are disordered. Trp441 is an ATP binding site.

It belongs to the Pup ligase/Pup deamidase family. Pup-conjugating enzyme subfamily.

The catalysed reaction is ATP + [prokaryotic ubiquitin-like protein]-L-glutamate + [protein]-L-lysine = ADP + phosphate + N(6)-([prokaryotic ubiquitin-like protein]-gamma-L-glutamyl)-[protein]-L-lysine.. The protein operates within protein degradation; proteasomal Pup-dependent pathway. It functions in the pathway protein modification; protein pupylation. Its function is as follows. Catalyzes the covalent attachment of the prokaryotic ubiquitin-like protein modifier Pup to the proteasomal substrate proteins, thereby targeting them for proteasomal degradation. This tagging system is termed pupylation. The ligation reaction involves the side-chain carboxylate of the C-terminal glutamate of Pup and the side-chain amino group of a substrate lysine. The sequence is that of Pup--protein ligase from Rothia mucilaginosa (strain DY-18) (Stomatococcus mucilaginosus).